A 275-amino-acid polypeptide reads, in one-letter code: 4,5-DOPA dioxygenase extradiol 1 (275 aa).

Positions 22, 60, 182, and 236 each coordinate Zn(2+).

Belongs to the DODA-type extradiol aromatic ring-opening dioxygenase family. Zn(2+) is required as a cofactor.

The catalysed reaction is L-dopa + O2 = 4-(L-alanin-3-yl)-2-hydroxy-cis,cis-muconate 6-semialdehyde + H(+). The protein operates within pigment biosynthesis; betalain biosynthesis. Functionally, opens the cyclic ring of dihydroxy-phenylalanine (DOPA) between carbons 4 and 5, thus producing an unstable seco-DOPA that rearranges nonenzymatically to betalamic acid. This Beta vulgaris (Sugar beet) protein is 4,5-DOPA dioxygenase extradiol 1.